Consider the following 187-residue polypeptide: UPF0215 protein PAE0952 (187 aa).

Belongs to the UPF0215 family.

In Pyrobaculum aerophilum (strain ATCC 51768 / DSM 7523 / JCM 9630 / CIP 104966 / NBRC 100827 / IM2), this protein is UPF0215 protein PAE0952.